The chain runs to 36 residues: Photosystem I reaction center subunit VIII (36 aa).

The chain crosses the membrane as a helical span at residues 6-28 (LPSIFVPLVGLLFPAIAMVSLFF).

This sequence belongs to the PsaI family.

Its subcellular location is the plastid. The protein resides in the chloroplast thylakoid membrane. May help in the organization of the PsaL subunit. The chain is Photosystem I reaction center subunit VIII from Nymphaea alba (White water-lily).